We begin with the raw amino-acid sequence, 141 residues long: Large ribosomal subunit protein uL16 (141 aa).

This sequence belongs to the universal ribosomal protein uL16 family. In terms of assembly, part of the 50S ribosomal subunit.

Binds 23S rRNA and is also seen to make contacts with the A and possibly P site tRNAs. This is Large ribosomal subunit protein uL16 from Deinococcus geothermalis (strain DSM 11300 / CIP 105573 / AG-3a).